The sequence spans 173 residues: Transcriptional regulator ERG homolog (173 aa).

The segment at residues 1-84 (SGQIQLWQFL…HGKRYAYKFD (84 aa)) is a DNA-binding region (ETS).

This sequence belongs to the ETS family.

It localises to the nucleus. Acts as a transcriptional activator. The sequence is that of Transcriptional regulator ERG homolog (ERG) from Lytechinus variegatus (Green sea urchin).